The following is a 270-amino-acid chain: Beta carbonic anhydrase 1 (270 aa).

Positions 39, 41, 105, and 108 each coordinate Zn(2+).

Belongs to the beta-class carbonic anhydrase family. Requires Zn(2+) as cofactor.

It catalyses the reaction hydrogencarbonate + H(+) = CO2 + H2O. In terms of biological role, reversible hydration of carbon dioxide. The sequence is that of Beta carbonic anhydrase 1 from Caenorhabditis briggsae.